Reading from the N-terminus, the 272-residue chain is Small ribosomal subunit biogenesis GTPase RsgA (272 aa).

Residues 56–207 form the CP-type G domain; that stretch reads KNILIRPKVA…IIDTPGFSSI (152 aa). GTP is bound by residues 105–108 and 151–159; these read TKAD and GQSGVGKTT. Residues C230, C235, H237, and C245 each coordinate Zn(2+).

The protein belongs to the TRAFAC class YlqF/YawG GTPase family. RsgA subfamily. As to quaternary structure, monomer. Associates with 30S ribosomal subunit, binds 16S rRNA. Zn(2+) serves as cofactor.

It is found in the cytoplasm. In terms of biological role, one of several proteins that assist in the late maturation steps of the functional core of the 30S ribosomal subunit. Helps release RbfA from mature subunits. May play a role in the assembly of ribosomal proteins into the subunit. Circularly permuted GTPase that catalyzes slow GTP hydrolysis, GTPase activity is stimulated by the 30S ribosomal subunit. The chain is Small ribosomal subunit biogenesis GTPase RsgA from Mycoplasmopsis pulmonis (strain UAB CTIP) (Mycoplasma pulmonis).